Consider the following 146-residue polypeptide: Hut operon positive regulatory protein (146 aa).

This sequence belongs to the HutP family. As to quaternary structure, homohexamer.

In terms of biological role, antiterminator that binds to cis-acting regulatory sequences on the mRNA in the presence of histidine, thereby suppressing transcription termination and activating the hut operon for histidine utilization. This Bacillus cereus (strain G9842) protein is Hut operon positive regulatory protein.